The following is a 326-amino-acid chain: MAISWRTWLKKTIHCDNSYVRTGLAEFLGTFLLVLLLNGMIITAHMSVRNADGTMAHPLNTAHLAFGGGLAVMVAVLVSGGISGAHLNPAVTTTMLVMGRLSPLKSLVYIFMQYMGAFFAASILYAVYFESILAYDYGERQVLGANGTAGWFATYPQEHISLVTQIFDAILGTGLLVMGIFAIIDPNNMAVPKGQIPLYVGFLISSLIFSFSYNAGAALNPARDLAPRLFLWVIGYGAEAFTARGHLWWLVPVIGPHVGGLLGGVTYQMFIGAHYQSDRKLKPATIMDEDDDTNATYNTITTTTHQKVYNGRRNFDESVPLKTVHA.

2 helical membrane-spanning segments follow: residues 24–44 and 64–84; these read LAEF…IITA and LAFG…GISG. The NPA 1 signature appears at 88–90; sequence NPA. The chain crosses the membrane as a helical span at residues 107–127; sequence LVYIFMQYMGAFFAASILYAV. An N-linked (GlcNAc...) asparagine glycan is attached at N146. Helical transmembrane passes span 166–186 and 196–216; these read IFDA…IIDP and IPLY…YNAG. An NPA 2 motif is present at residues 220–222; that stretch reads NPA. Residues 247-267 traverse the membrane as a helical segment; that stretch reads LWWLVPVIGPHVGGLLGGVTY. N294 carries an N-linked (GlcNAc...) asparagine glycan.

It belongs to the MIP/aquaporin (TC 1.A.8) family.

Its subcellular location is the cell membrane. Its function is as follows. Aquaglyceroporin that may modulate the water content and osmolytes during anhydrobiosis. In Milnesium tardigradum (Water bear), this protein is Aquaporin-3.